A 289-amino-acid polypeptide reads, in one-letter code: MRKFTAFACGTGAGLAAYYLQKLRDPQLAVHNSWTNSDRPISECALWDSNWDFRDPKSLVRPQKNDLPQEQNRYNSDLEKHVAKSARHIILIRHGEYLDVGDSDDTHHLTDRGRLQAKYTGQRLRELGIKWDKVIASNMVRAQETADIILNQIDYDKAKLKHCSYLREGAPIPPQPPVGHWKPEASQFFRDGARIEAAFRRYFHRALPEQEKESYTLIVGHGNVIRYFVCRALQFPAEAWLRISINHASITWLTISPSGNVSIKYLGDTGFMPAKYLTHRIPRDAKNVV.

A helical transmembrane segment spans residues 7–23; the sequence is FACGTGAGLAAYYLQKL.

The protein belongs to the phosphoglycerate mutase family. BPG-dependent PGAM subfamily. Interacts with Pk92B/ASK1.

Its subcellular location is the mitochondrion outer membrane. The enzyme catalyses O-phospho-L-seryl-[protein] + H2O = L-seryl-[protein] + phosphate. It carries out the reaction O-phospho-L-threonyl-[protein] + H2O = L-threonyl-[protein] + phosphate. Functionally, displays phosphatase activity for serine/threonine residues, and dephosphorylates and activates Pk92B kinase. Has apparently no phosphoglycerate mutase activity. The protein is Serine/threonine-protein phosphatase Pgam5, mitochondrial of Drosophila virilis (Fruit fly).